Here is a 461-residue protein sequence, read N- to C-terminus: Glutamate--tRNA ligase (461 aa).

The short motif at 8 to 18 (PSPTGYLHIGG) is the 'HIGH' region element. The 'KMSKS' region signature appears at 240 to 244 (KMSKR). Lysine 243 contributes to the ATP binding site.

The protein belongs to the class-I aminoacyl-tRNA synthetase family. Glutamate--tRNA ligase type 1 subfamily. Monomer.

The protein resides in the cytoplasm. It catalyses the reaction tRNA(Glu) + L-glutamate + ATP = L-glutamyl-tRNA(Glu) + AMP + diphosphate. Catalyzes the attachment of glutamate to tRNA(Glu) in a two-step reaction: glutamate is first activated by ATP to form Glu-AMP and then transferred to the acceptor end of tRNA(Glu). The chain is Glutamate--tRNA ligase from Chromobacterium violaceum (strain ATCC 12472 / DSM 30191 / JCM 1249 / CCUG 213 / NBRC 12614 / NCIMB 9131 / NCTC 9757 / MK).